Consider the following 616-residue polypeptide: Dihydroxy-acid dehydratase (616 aa).

Residue Asp81 coordinates Mg(2+). Cys122 is a [2Fe-2S] cluster binding site. The Mg(2+) site is built by Asp123 and Lys124. The residue at position 124 (Lys124) is an N6-carboxylysine. Cys195 lines the [2Fe-2S] cluster pocket. Glu491 lines the Mg(2+) pocket. The active-site Proton acceptor is Ser517.

This sequence belongs to the IlvD/Edd family. In terms of assembly, homodimer. The cofactor is [2Fe-2S] cluster. It depends on Mg(2+) as a cofactor.

The enzyme catalyses (2R)-2,3-dihydroxy-3-methylbutanoate = 3-methyl-2-oxobutanoate + H2O. It carries out the reaction (2R,3R)-2,3-dihydroxy-3-methylpentanoate = (S)-3-methyl-2-oxopentanoate + H2O. It functions in the pathway amino-acid biosynthesis; L-isoleucine biosynthesis; L-isoleucine from 2-oxobutanoate: step 3/4. It participates in amino-acid biosynthesis; L-valine biosynthesis; L-valine from pyruvate: step 3/4. Functions in the biosynthesis of branched-chain amino acids. Catalyzes the dehydration of (2R,3R)-2,3-dihydroxy-3-methylpentanoate (2,3-dihydroxy-3-methylvalerate) into 2-oxo-3-methylpentanoate (2-oxo-3-methylvalerate) and of (2R)-2,3-dihydroxy-3-methylbutanoate (2,3-dihydroxyisovalerate) into 2-oxo-3-methylbutanoate (2-oxoisovalerate), the penultimate precursor to L-isoleucine and L-valine, respectively. The polypeptide is Dihydroxy-acid dehydratase (Shewanella woodyi (strain ATCC 51908 / MS32)).